We begin with the raw amino-acid sequence, 126 residues long: Small ribosomal subunit protein bS6 (126 aa).

Residues 107-126 (RDRERGERSERPRDDFAPAA) are disordered.

This sequence belongs to the bacterial ribosomal protein bS6 family.

In terms of biological role, binds together with bS18 to 16S ribosomal RNA. This is Small ribosomal subunit protein bS6 from Caulobacter sp. (strain K31).